Consider the following 207-residue polypeptide: Large ribosomal subunit protein uL4 (207 aa).

The protein belongs to the universal ribosomal protein uL4 family. As to quaternary structure, part of the 50S ribosomal subunit.

One of the primary rRNA binding proteins, this protein initially binds near the 5'-end of the 23S rRNA. It is important during the early stages of 50S assembly. It makes multiple contacts with different domains of the 23S rRNA in the assembled 50S subunit and ribosome. Functionally, forms part of the polypeptide exit tunnel. The chain is Large ribosomal subunit protein uL4 from Pelagibacter ubique (strain HTCC1062).